A 922-amino-acid chain; its full sequence is Putative ATP-dependent helicase/translocase YwqA (922 aa).

Residues 462–625 (LFLRESGFGA…WSIFDFMNKG (164 aa)) enclose the Helicase ATP-binding domain. Position 475–482 (475–482 (DDMGLGKT)) interacts with ATP. Residues 576 to 579 (DEAQ) carry the DEAQ box motif. Residues 753-907 (KLLELMTAIR…QSENWITELS (155 aa)) enclose the Helicase C-terminal domain.

Belongs to the SNF2/RAD54 helicase family. Interacts with the RNA polymerase core.

The sequence is that of Putative ATP-dependent helicase/translocase YwqA (ywqA) from Bacillus subtilis (strain 168).